The chain runs to 149 residues: Protein SprT-like (149 aa).

Residues 4–144 (TDYVKQVSLE…GLCRGKLLLV (141 aa)) form the SprT-like domain. Residue His-64 coordinates Zn(2+). Glu-65 is an active-site residue. Residue His-68 participates in Zn(2+) binding.

Belongs to the SprT family. Requires Zn(2+) as cofactor.

The protein localises to the cytoplasm. This is Protein SprT-like from Streptococcus pneumoniae serotype 4 (strain ATCC BAA-334 / TIGR4).